The primary structure comprises 252 residues: Phosphate import ATP-binding protein PstB (252 aa).

One can recognise an ABC transporter domain in the interval 6–247; sequence ITIEKLNLYY…PKDERTEKYI (242 aa). 38–45 is an ATP binding site; it reads GPSGCGKS.

It belongs to the ABC transporter superfamily. Phosphate importer (TC 3.A.1.7) family. As to quaternary structure, the complex is composed of two ATP-binding proteins (PstB), two transmembrane proteins (PstC and PstA) and a solute-binding protein (PstS).

Its subcellular location is the cell membrane. The catalysed reaction is phosphate(out) + ATP + H2O = ADP + 2 phosphate(in) + H(+). Part of the ABC transporter complex PstSACB involved in phosphate import. Responsible for energy coupling to the transport system. The chain is Phosphate import ATP-binding protein PstB from Lactobacillus delbrueckii subsp. bulgaricus (strain ATCC 11842 / DSM 20081 / BCRC 10696 / JCM 1002 / NBRC 13953 / NCIMB 11778 / NCTC 12712 / WDCM 00102 / Lb 14).